A 145-amino-acid chain; its full sequence is D-aminoacyl-tRNA deacylase (145 aa).

The Gly-cisPro motif, important for rejection of L-amino acids signature appears at 137–138; it reads GP.

Belongs to the DTD family. Homodimer.

It localises to the cytoplasm. It catalyses the reaction glycyl-tRNA(Ala) + H2O = tRNA(Ala) + glycine + H(+). It carries out the reaction a D-aminoacyl-tRNA + H2O = a tRNA + a D-alpha-amino acid + H(+). Functionally, an aminoacyl-tRNA editing enzyme that deacylates mischarged D-aminoacyl-tRNAs. Also deacylates mischarged glycyl-tRNA(Ala), protecting cells against glycine mischarging by AlaRS. Acts via tRNA-based rather than protein-based catalysis; rejects L-amino acids rather than detecting D-amino acids in the active site. By recycling D-aminoacyl-tRNA to D-amino acids and free tRNA molecules, this enzyme counteracts the toxicity associated with the formation of D-aminoacyl-tRNA entities in vivo and helps enforce protein L-homochirality. This Shewanella denitrificans (strain OS217 / ATCC BAA-1090 / DSM 15013) protein is D-aminoacyl-tRNA deacylase.